We begin with the raw amino-acid sequence, 283 residues long: Elongation factor Ts (283 aa).

The segment at 80 to 83 is involved in Mg(2+) ion dislocation from EF-Tu; sequence TDFV.

This sequence belongs to the EF-Ts family.

Its subcellular location is the cytoplasm. Functionally, associates with the EF-Tu.GDP complex and induces the exchange of GDP to GTP. It remains bound to the aminoacyl-tRNA.EF-Tu.GTP complex up to the GTP hydrolysis stage on the ribosome. The polypeptide is Elongation factor Ts (Erwinia tasmaniensis (strain DSM 17950 / CFBP 7177 / CIP 109463 / NCPPB 4357 / Et1/99)).